Here is a 915-residue protein sequence, read N- to C-terminus: Coronin-7 (915 aa).

WD repeat units lie at residues 75-115 (CHSD…QALP), 124-163 (PEDA…PLTE), 166-205 (THGD…EAAQ), and 209-253 (AHEN…AALT). Positions 396–456 (TSCLAPPAEL…TSPSQRSLQS (61 aa)) are disordered. Composition is skewed to low complexity over residues 399–413 (LAPP…AQPA) and 420–450 (SSTP…TSPS). Ser-453 and Ser-456 each carry phosphoserine. Residue Lys-463 forms a Glycyl lysine isopeptide (Lys-Gly) (interchain with G-Cter in ubiquitin) linkage. WD repeat units lie at residues 533–573 (QNGV…LQEV), 583–623 (GHTE…EQLR), 626–665 (GHRD…EPLQ), and 719–759 (DVAP…PFFL). A disordered region spans residues 850 to 915 (PPGMTPVSQA…FEGVDEDEWD (66 aa)). A compositionally biased stretch (low complexity) spans 859–869 (APREAPARRAP). Positions 874–886 (LEEKSDQQKKEEL) are enriched in basic and acidic residues. Ser-905 is modified (phosphoserine).

It belongs to the WD repeat coronin family. In terms of assembly, interacts with clathrin adapter AP1 complex. This interaction takes place at Golgi membranes and not AP1-positive endosomal membranes. Interacts (when ubiquitinated at Lys-463) with EPS15. The membrane-associated form is phosphorylated on tyrosine residues. Post-translationally, ubiquitinated via 'Lys-33'-linked ubiquitin chains by the BCR(KLHL20) E3 ubiquitin ligase complex: 'Lys-33'-linked ubiquitination promotes interaction with EPS15 and facilitates actin polymerization at the trans-Golgi network, thereby facilitating post-Golgi trafficking. Deubiquitinated by ZRANB1/TRABID.

The protein localises to the golgi apparatus membrane. Its subcellular location is the golgi apparatus. It is found in the trans-Golgi network. The protein resides in the cytoplasmic vesicle. It localises to the cytoplasm. The protein localises to the cytosol. Its function is as follows. F-actin regulator involved in anterograde Golgi to endosome transport: upon ubiquitination via 'Lys-33'-linked ubiquitin chains by the BCR(KLHL20) E3 ubiquitin ligase complex, interacts with EPS15 and localizes to the trans-Golgi network, where it promotes actin polymerization, thereby facilitating post-Golgi trafficking. May play a role in the maintenance of the Golgi apparatus morphology. In Bos taurus (Bovine), this protein is Coronin-7 (CORO7).